Reading from the N-terminus, the 158-residue chain is MNTSQAEIELDLDLQLAIENSQLPSKQNFELWVRTALPKTMAEAELTIRIVDEAESQELNSTYRGKDKPTNVLSFPFEAPPEIEIPLLGDLIICAPVVELEALQQNKPLQAHWAHMVVHGCLHLLGYDHINDAEAEEMESLETQLVESLGFNNPYKEQ.

Positions 119, 123, and 129 each coordinate Zn(2+).

Belongs to the endoribonuclease YbeY family. Zn(2+) is required as a cofactor.

The protein localises to the cytoplasm. Its function is as follows. Single strand-specific metallo-endoribonuclease involved in late-stage 70S ribosome quality control and in maturation of the 3' terminus of the 16S rRNA. This is Endoribonuclease YbeY from Shewanella sediminis (strain HAW-EB3).